Consider the following 761-residue polypeptide: Semaphorin-4A (761 aa).

An N-terminal signal peptide occupies residues 1-32 (MALPALGLDPWSLLGLFLFQLLQLLLPTTTAG). Over 33-683 (GGGQGPMPRV…LAAQQSYWPH (651 aa)) the chain is Extracellular. Residues 36 to 494 (QGPMPRVRYY…FSGGVWRVPR (459 aa)) enclose the Sema domain. Cysteine 113 and cysteine 124 form a disulfide bridge. Asparagine 120 and asparagine 135 each carry an N-linked (GlcNAc...) asparagine glycan. Disulfide bonds link cysteine 142/cysteine 151, cysteine 269/cysteine 379, and cysteine 293/cysteine 339. The N-linked (GlcNAc...) asparagine glycan is linked to asparagine 496. One can recognise a PSI domain in the interval 496 to 548 (NCSVYESCVDCVLARDPHCAWDPESRTCCLLSAPNLNSWKQDMERGNPEWACA). Intrachain disulfides connect cysteine 497–cysteine 514, cysteine 506–cysteine 523, and cysteine 580–cysteine 624. The 59-residue stretch at 573–631 (NSILELPCPHLSALASYYWSHGPAAVPEASSTVYNGSLLLIVQDGVGGLYQCWATENGF) folds into the Ig-like C2-type domain. An N-linked (GlcNAc...) asparagine glycan is attached at asparagine 607. A helical transmembrane segment spans residues 684-704 (FVTVTVLFALVLSGALIILVA). At 705-761 (SPLRALRARGKVQGCETLRPGEKAPLSREQHLQSPKECRTSASDVDADNNCLGTEVA) the chain is on the cytoplasmic side. The segment at 722–749 (LRPGEKAPLSREQHLQSPKECRTSASDV) is disordered. The span at 723-743 (RPGEKAPLSREQHLQSPKECR) shows a compositional bias: basic and acidic residues.

It belongs to the semaphorin family. In terms of assembly, interacts with PLXNB1, PLXNB2, PLXNB3, PLXND1 and TIMD2.

The protein resides in the cell membrane. Its function is as follows. Cell surface receptor for PLXNB1, PLXNB2, PLXNB3 and PLXND1 that plays an important role in cell-cell signaling. Regulates glutamatergic and GABAergic synapse development. Promotes the development of inhibitory synapses in a PLXNB1-dependent manner and promotes the development of excitatory synapses in a PLXNB2-dependent manner. Plays a role in priming antigen-specific T-cells, promotes differentiation of Th1 T-helper cells, and thereby contributes to adaptive immunity. Promotes phosphorylation of TIMD2. Inhibits angiogenesis. Promotes axon growth cone collapse. Inhibits axonal extension by providing local signals to specify territories inaccessible for growing axons. The chain is Semaphorin-4A (SEMA4A) from Homo sapiens (Human).